The chain runs to 61 residues: MAEVRVGENESLDNALRRFRRQCSKAGVLSEVRKREHYESPSVKRKKKSEAARKRKYKYNK.

The tract at residues 34-61 is disordered; that stretch reads KREHYESPSVKRKKKSEAARKRKYKYNK. Positions 43 to 61 are enriched in basic residues; that stretch reads VKRKKKSEAARKRKYKYNK.

The protein belongs to the bacterial ribosomal protein bS21 family.

This Thermoanaerobacter pseudethanolicus (strain ATCC 33223 / 39E) (Clostridium thermohydrosulfuricum) protein is Small ribosomal subunit protein bS21.